The following is a 206-amino-acid chain: LexA repressor (206 aa).

Residues 28–48 constitute a DNA-binding region (H-T-H motif); sequence RAEIATRLGFKSANAAEEHLK. Residues serine 123 and lysine 160 each act as for autocatalytic cleavage activity in the active site.

It belongs to the peptidase S24 family. Homodimer.

The catalysed reaction is Hydrolysis of Ala-|-Gly bond in repressor LexA.. Its function is as follows. Represses a number of genes involved in the response to DNA damage (SOS response), including recA and lexA. In the presence of single-stranded DNA, RecA interacts with LexA causing an autocatalytic cleavage which disrupts the DNA-binding part of LexA, leading to derepression of the SOS regulon and eventually DNA repair. This chain is LexA repressor, found in Shewanella oneidensis (strain ATCC 700550 / JCM 31522 / CIP 106686 / LMG 19005 / NCIMB 14063 / MR-1).